A 242-amino-acid polypeptide reads, in one-letter code: Ras-like protein family member 11A (242 aa).

A small GTPase-like region spans residues 17–241; sequence ESSSDYLLPK…SSKAKAASTL (225 aa). GTP-binding positions include 34–41, 81–85, and 147–150; these read GASCVGKS, DTPGG, and NKGD.

Belongs to the small GTPase superfamily. Ras family. As to quaternary structure, interacts with UBF/UBTF.

Its subcellular location is the nucleus. The protein localises to the nucleolus. It catalyses the reaction GTP + H2O = GDP + phosphate + H(+). Functionally, regulator of rDNA transcription. Acts in cooperation UBF/UBTF and positively regulates RNA polymerase I transcription. The sequence is that of Ras-like protein family member 11A from Rattus norvegicus (Rat).